The primary structure comprises 87 residues: Small ribosomal subunit protein uS17 (87 aa).

Belongs to the universal ribosomal protein uS17 family. In terms of assembly, part of the 30S ribosomal subunit.

In terms of biological role, one of the primary rRNA binding proteins, it binds specifically to the 5'-end of 16S ribosomal RNA. The protein is Small ribosomal subunit protein uS17 of Bacillus thuringiensis (strain Al Hakam).